The following is a 499-amino-acid chain: Cytochrome P450 monooxygenase notH' (499 aa).

The helical transmembrane segment at 11–31 threads the bilayer; the sequence is LGLEPAGWALALLTSSIIYLF. Asn296 and Asn427 each carry an N-linked (GlcNAc...) asparagine glycan. A heme-binding site is contributed by Cys440.

This sequence belongs to the cytochrome P450 family. Heme is required as a cofactor.

It is found in the membrane. It functions in the pathway alkaloid biosynthesis. Functionally, cytochrome P450 monooxygenase; part of the gene cluster that mediates the biosynthesis of notoamide, a fungal indole alkaloid that belongs to a family of natural products containing a characteristic bicyclo[2.2.2]diazaoctane core. The first step of notoamide biosynthesis involves coupling of L-proline and L-tryptophan by the bimodular NRPS notE', to produce cyclo-L-tryptophan-L-proline called brevianamide F. The reverse prenyltransferase notF' then acts as a deoxybrevianamide E synthase and converts brevianamide F to deoxybrevianamide E via reverse prenylation at C-2 of the indole ring leading to the bicyclo[2.2.2]diazaoctane core. Deoxybrevianamide E is further hydroxylated at C-6 of the indole ring, likely catalyzed by the cytochrome P450 monooxygenase notG', to yield 6-hydroxy-deoxybrevianamide E. 6-hydroxy-deoxybrevianamide E is a specific substrate of the prenyltransferase notC' for normal prenylation at C-7 to produce 6-hydroxy-7-prenyl-deoxybrevianamide, also called notoamide S. As the proposed pivotal branching point in notoamide biosynthesis, notoamide S can be diverted to notoamide E through an oxidative pyran ring closure putatively catalyzed by either notH' cytochrome P450 monooxygenase or the notD' FAD-linked oxidoreductase. This step would be followed by an indole 2,3-epoxidation-initiated pinacol-like rearrangement catalyzed by the notB' FAD-dependent monooxygenase leading to the formation of notoamide C and notoamide D. On the other hand notoamide S is converted to notoamide T by notH' (or notD'), a bifunctional oxidase that also functions as the intramolecular Diels-Alderase responsible for generation of (-)-notoamide T. To generate antipodal (+)-notoaminide T, notH (or notD) in Aspergillus strain MF297-2 is expected to catalyze a Diels-Alder reaction leading to the opposite stereochemistry. The remaining oxidoreductase notD' (or notH') likely catalyzes the oxidative pyran ring formation to yield (-)-stephacidin A. The FAD-dependent monooxygenase notI' is highly similar to notB' and is predicted to catalyze a similar conversion from (-)-stephacidin A to (+)-notoamide B via the 2,3-epoxidation of (-)-stephacidin A followed by a pinacol-type rearrangement. Finally, it remains unclear which enzyme could be responsible for the final hydroxylation steps leading to notoamide A and sclerotiamide. The chain is Cytochrome P450 monooxygenase notH' from Aspergillus versicolor.